The following is a 1157-amino-acid chain: Peroxisomal ATPase PEX1 (1157 aa).

Disordered stretches follow at residues 187–221 and 1135–1157; these read SISS…NNGE and SGRD…STLM. Positions 205-217 are enriched in low complexity; sequence SSTSTATGRRSVT.

This sequence belongs to the AAA ATPase family. Interacts with PEX6; forming the PEX1-PEX6 AAA ATPase complex, which is composed of a heterohexamer formed by a trimer of PEX1-PEX6 dimers.

It localises to the membrane. It catalyses the reaction ATP + H2O = ADP + phosphate + H(+). Its function is as follows. Component of the PEX1-PEX6 AAA ATPase complex involved in peroxisome biosynthesis. The complex acts as a protein dislocase complex that mediates the ATP-dependent extraction of the PEX5 receptor from peroxisomal membranes, an essential step for PEX5 recycling. Specifically recognizes PEX5 monoubiquitinated at 'Cys-6', and pulls it out of the peroxisome lumen through the PEX2-PEX10-PEX12 retrotranslocation channel. Extraction by the PEX1-PEX6 AAA ATPase complex is accompanied by unfolding of the TPR repeats and release of bound cargo from PEX5. The sequence is that of Peroxisomal ATPase PEX1 from Komagataella pastoris (Yeast).